We begin with the raw amino-acid sequence, 330 residues long: Phosphate acyltransferase (330 aa).

This sequence belongs to the PlsX family. As to quaternary structure, homodimer. Probably interacts with PlsY.

It localises to the cytoplasm. It carries out the reaction a fatty acyl-[ACP] + phosphate = an acyl phosphate + holo-[ACP]. It participates in lipid metabolism; phospholipid metabolism. Functionally, catalyzes the reversible formation of acyl-phosphate (acyl-PO(4)) from acyl-[acyl-carrier-protein] (acyl-ACP). This enzyme utilizes acyl-ACP as fatty acyl donor, but not acyl-CoA. This is Phosphate acyltransferase from Streptococcus pneumoniae (strain ATCC 700669 / Spain 23F-1).